The sequence spans 636 residues: Threonine--tRNA ligase (636 aa).

A TGS domain is found at 1 to 61 (MPVITLPDGS…TQDVSLSIIT (61 aa)). The tract at residues 242-533 (DHRKLGKKFD…LIEEYEGAFP (292 aa)) is catalytic. Zn(2+) contacts are provided by cysteine 333, histidine 384, and histidine 510.

This sequence belongs to the class-II aminoacyl-tRNA synthetase family. In terms of assembly, homodimer. It depends on Zn(2+) as a cofactor.

Its subcellular location is the cytoplasm. It carries out the reaction tRNA(Thr) + L-threonine + ATP = L-threonyl-tRNA(Thr) + AMP + diphosphate + H(+). In terms of biological role, catalyzes the attachment of threonine to tRNA(Thr) in a two-step reaction: L-threonine is first activated by ATP to form Thr-AMP and then transferred to the acceptor end of tRNA(Thr). Also edits incorrectly charged L-seryl-tRNA(Thr). This chain is Threonine--tRNA ligase, found in Saccharophagus degradans (strain 2-40 / ATCC 43961 / DSM 17024).